Reading from the N-terminus, the 118-residue chain is Large ribosomal subunit protein uL18 (118 aa).

The segment covering 1 to 10 (MKTTRRDATR) has biased composition (basic and acidic residues). Residues 1 to 20 (MKTTRRDATRSRHQRVRRKV) are disordered. Residues 11-20 (SRHQRVRRKV) show a composition bias toward basic residues.

The protein belongs to the universal ribosomal protein uL18 family. In terms of assembly, part of the 50S ribosomal subunit; part of the 5S rRNA/L5/L18/L25 subcomplex. Contacts the 5S and 23S rRNAs.

This is one of the proteins that bind and probably mediate the attachment of the 5S RNA into the large ribosomal subunit, where it forms part of the central protuberance. This chain is Large ribosomal subunit protein uL18, found in Acaryochloris marina (strain MBIC 11017).